A 2192-amino-acid chain; its full sequence is BEACH domain-containing protein lvsE (2192 aa).

Disordered regions lie at residues 948-969, 996-1065, 1160-1303, and 1343-1363; these read STSL…TSTG, TTTT…DEPE, NESQ…NNLS, and DENG…SSSN. Low complexity predominate over residues 996–1049; it reads TTTTTTTTTTTTTTSTTSNTGNDSPLSIESPISSPVLIENTTNTTNTTTTNTTN. Residues 1171 to 1187 are compositionally biased toward polar residues; the sequence is NIDNLNPNTGLPYNKST. A compositionally biased stretch (low complexity) spans 1188 to 1231; that stretch reads NNLSNVNNVNNNNNNNSNNINVSGNNTIGPSSSKSPLRNSRSMS. Polar residues predominate over residues 1232 to 1243; the sequence is IGSSATKSPSRQ. Low complexity-rich tracts occupy residues 1253–1303 and 1350–1363; these read NNNS…NNLS and SSPN…SSSN. Residues 1366-1491 enclose the BEACH-type PH domain; it reads IEEEKFIGSW…ESIQIFNKIV (126 aa). A BEACH domain is found at 1504–1795; the sequence is DHPSKIIKKS…QLFSKPHPIR (292 aa). The segment covering 1823-1849 has biased composition (low complexity); that stretch reads GTINSSFSSTSTSTSTSSPPPSTLNSP. Residues 1823–1851 are disordered; it reads GTINSSFSSTSTSTSTSSPPPSTLNSPQG. WD repeat units lie at residues 1973-2012, 2022-2061, and 2156-2192; these read FHHD…IKDS, SHDE…YQRS, and DSPA…VKDL.

The sequence is that of BEACH domain-containing protein lvsE (lvsE) from Dictyostelium discoideum (Social amoeba).